A 418-amino-acid polypeptide reads, in one-letter code: Serine/threonine transporter SstT (418 aa).

The next 8 membrane-spanning stretches (helical) occupy residues 21-41 (ILIG…AAIA), 49-69 (FVGA…IASI), 83-103 (ILFL…VVSF), 142-162 (ALLN…GIAL), 190-210 (FAPL…GFGA), 217-237 (LLVV…PLIV), 299-319 (MAGA…TLGI), and 331-351 (VVAA…LLLI).

This sequence belongs to the dicarboxylate/amino acid:cation symporter (DAACS) (TC 2.A.23) family.

It localises to the cell inner membrane. It catalyses the reaction L-serine(in) + Na(+)(in) = L-serine(out) + Na(+)(out). It carries out the reaction L-threonine(in) + Na(+)(in) = L-threonine(out) + Na(+)(out). Its function is as follows. Involved in the import of serine and threonine into the cell, with the concomitant import of sodium (symport system). The protein is Serine/threonine transporter SstT of Yersinia pestis bv. Antiqua (strain Antiqua).